Reading from the N-terminus, the 474-residue chain is Gamma-aminobutyric acid receptor subunit beta-1 (474 aa).

The N-terminal stretch at 1-25 is a signal peptide; it reads MWTVQNRESLGLLSFPVMITMVCCA. Residues 26–245 are Extracellular-facing; that stretch reads HSTNEPSNMS…SFRLKRNIGY (220 aa). Asn-105 carries an N-linked (GlcNAc...) asparagine glycan. Tyr-122 provides a ligand contact to histamine. A disulfide bond links Cys-161 and Cys-175. A glycan (N-linked (GlcNAc...) asparagine) is linked at Asn-174. Histamine is bound by residues 181–182 and Thr-227; that span reads SY. Residues Tyr-182 and Thr-227 each contribute to the 4-aminobutanoate site. The next 3 helical transmembrane spans lie at 246–267, 271–293, and 305–327; these read FILQTYMPSTLITILSWVSFWI, ASAARVALGITTVLTMTTISTHL, and AIDIYLMGCFVFVFLALLEYAFV. At 328 to 451 the chain is on the cytoplasmic side; the sequence is NYIFFGKGPQ…DLTDVNSIDK (124 aa). The helical transmembrane segment at 452 to 473 threads the bilayer; that stretch reads WSRMFFPITFSLFNVVYWLYYV.

This sequence belongs to the ligand-gated ion channel (TC 1.A.9) family. Gamma-aminobutyric acid receptor (TC 1.A.9.5) subfamily. GABRB1 sub-subfamily. Heteropentamer, formed by a combination of alpha (GABRA1-6), beta (GABRB1-3), gamma (GABRG1-3), delta (GABRD), epsilon (GABRE), rho (GABRR1-3), pi (GABRP) and theta (GABRQ) chains, each subunit exhibiting distinct physiological and pharmacological properties. Binds UBQLN1.

It is found in the postsynaptic cell membrane. The protein localises to the cell membrane. The catalysed reaction is chloride(in) = chloride(out). Potentiated by etomidate, propofol, pregnanolone and flurazepam. Potentiated by histamine. Functionally, beta subunit of the heteropentameric ligand-gated chloride channel gated by gamma-aminobutyric acid (GABA), a major inhibitory neurotransmitter in the brain. GABA-gated chloride channels, also named GABA(A) receptors (GABAAR), consist of five subunits arranged around a central pore and contain one or two GABA active binding sites located at the alpha and beta subunit interfaces, depending on subunit composition. When activated by GABA, GABAARs selectively allow the flow of chloride anions across the cell membrane down their electrochemical gradient. Chloride influx into the postsynaptic neuron following GABAAR opening decreases the neuron ability to generate a new action potential, thereby reducing nerve transmission. Beta-containing GABAARs can simultaneously bind GABA and histamine where histamine binds at the interface of two neighboring beta subunits, which may be involved in the regulation of sleep and wakefulness. The chain is Gamma-aminobutyric acid receptor subunit beta-1 from Homo sapiens (Human).